Reading from the N-terminus, the 182-residue chain is Ribosome maturation factor RimM (182 aa).

The 82-residue stretch at 101–182 folds into the PRC barrel domain; the sequence is VDEYYWSDLK…RIYVNWGVDY (82 aa).

The protein belongs to the RimM family. In terms of assembly, binds ribosomal protein uS19.

It is found in the cytoplasm. Functionally, an accessory protein needed during the final step in the assembly of 30S ribosomal subunit, possibly for assembly of the head region. Essential for efficient processing of 16S rRNA. May be needed both before and after RbfA during the maturation of 16S rRNA. It has affinity for free ribosomal 30S subunits but not for 70S ribosomes. The sequence is that of Ribosome maturation factor RimM from Acinetobacter baylyi (strain ATCC 33305 / BD413 / ADP1).